A 362-amino-acid polypeptide reads, in one-letter code: Probable dual-specificity RNA methyltransferase RlmN (362 aa).

Glutamate 105 functions as the Proton acceptor in the catalytic mechanism. Residues 111–344 form the Radical SAM core domain; that stretch reads HEYGNSICVT…VTIRREQGHD (234 aa). Cysteine 118 and cysteine 349 are disulfide-bonded. Residues cysteine 125, cysteine 129, and cysteine 132 each coordinate [4Fe-4S] cluster. Residues 175 to 176, serine 207, 230 to 232, and asparagine 306 contribute to the S-adenosyl-L-methionine site; these read GE and SLH. Cysteine 349 serves as the catalytic S-methylcysteine intermediate.

The protein belongs to the radical SAM superfamily. RlmN family. [4Fe-4S] cluster serves as cofactor.

The protein resides in the cytoplasm. It catalyses the reaction adenosine(2503) in 23S rRNA + 2 reduced [2Fe-2S]-[ferredoxin] + 2 S-adenosyl-L-methionine = 2-methyladenosine(2503) in 23S rRNA + 5'-deoxyadenosine + L-methionine + 2 oxidized [2Fe-2S]-[ferredoxin] + S-adenosyl-L-homocysteine. It carries out the reaction adenosine(37) in tRNA + 2 reduced [2Fe-2S]-[ferredoxin] + 2 S-adenosyl-L-methionine = 2-methyladenosine(37) in tRNA + 5'-deoxyadenosine + L-methionine + 2 oxidized [2Fe-2S]-[ferredoxin] + S-adenosyl-L-homocysteine. Its function is as follows. Specifically methylates position 2 of adenine 2503 in 23S rRNA and position 2 of adenine 37 in tRNAs. This chain is Probable dual-specificity RNA methyltransferase RlmN, found in Bacillus cereus (strain B4264).